A 688-amino-acid chain; its full sequence is G protein-coupled receptor kinase 3 (688 aa).

The interval 1-190 (MADLEAVLAD…ELNIHLSMND (190 aa)) is N-terminal. One can recognise an RGS domain in the interval 54 to 175 (TFDKIFNQKI…MESEKFTRFC (122 aa)). One can recognise a Protein kinase domain in the interval 191-453 (FSVHRIIGRG…ARELKEHIFF (263 aa)). Residues 197–205 (IGRGGFGEV) and Lys-220 each bind ATP. The active-site Proton acceptor is Asp-317. Residues 454–521 (KGIDWQYVYL…MISERWQQEV (68 aa)) form the AGC-kinase C-terminal domain. Residues 558–652 (DCIMHGYMLK…WLKELTCTFN (95 aa)) enclose the PH domain.

Belongs to the protein kinase superfamily. AGC Ser/Thr protein kinase family. GPRK subfamily. In terms of assembly, interacts with GIT1. Post-translationally, ubiquitinated. In terms of tissue distribution, expressed in brain cortex, hippocampus, striatum, hypothalamus, cerebellum and brainstem (at protein level).

It is found in the postsynapse. Its subcellular location is the presynapse. The catalysed reaction is [beta-adrenergic receptor] + ATP = [beta-adrenergic receptor]-phosphate + ADP + H(+). In terms of biological role, specifically phosphorylates the agonist-occupied form of the beta-adrenergic and closely related receptors. In Rattus norvegicus (Rat), this protein is G protein-coupled receptor kinase 3.